We begin with the raw amino-acid sequence, 444 residues long: MATITVVKARQIFDSRGNPTVEVDIHTSNGIKVTAAVPSGASTGIYEALELRDGGSDYLGKGVSKAVGNVNNIIGPALIGKDPTQQTAIDNFMVHELDGTQNEWGWCKQKLGANAILAVSLAVCKAGAVVSGIPLYKHIANLAGNPKIVLPVPAFNVINGGSHAGNKLAMQEFMILPVGAASFKEAMKMGVEVYHHLKSVIKKKYGQDATNVGDEGGFAPNIQENKEGLELLKTAIEKAGYTGKVVIGMDVAASEFYSEDKTYDLNFKEENNNGSQKISGDALKDLYKSFVAEYPIVSIEDPFDQDDWEHYAKMTTECGTEVQIVGDDLLVTNPKRVAKAIAEKSCNALLLKVNQIGSVTESIEAVKMSKKAGWGVMTSHRSGETEDTFIADLAVGLSTGQIKTGAPCRSERLAKYNQLLRIEEELGSEAIYAGVNFRKPVEPY.

The substrate site is built by His163 and Glu172. Residue Glu215 is the Proton donor of the active site. Asp250, Glu300, and Asp327 together coordinate Mg(2+). 2 residues coordinate substrate: Glu300 and Asp327. The Proton acceptor role is filled by Lys352. Residues 379 to 382 and Lys403 contribute to the substrate site; that span reads SHRS.

The protein belongs to the enolase family. As to quaternary structure, homodimer. It depends on Mg(2+) as a cofactor.

It localises to the cytoplasm. It is found in the cytosol. Its subcellular location is the nucleus. The protein localises to the mitochondrion outer membrane. It catalyses the reaction (2R)-2-phosphoglycerate = phosphoenolpyruvate + H2O. It participates in carbohydrate degradation; glycolysis; pyruvate from D-glyceraldehyde 3-phosphate: step 4/5. In terms of biological role, multifunctional enzyme that acts as an enolase involved in the metabolism and as a positive regulator of cold-responsive gene transcription. Binds to the cis-element the gene promoter of STZ/ZAT10, a zinc finger transcriptional repressor. The polypeptide is Bifunctional enolase 2/transcriptional activator (ENO2) (Arabidopsis thaliana (Mouse-ear cress)).